Consider the following 172-residue polypeptide: Pollen-specific protein-like At4g18596 (172 aa).

The signal sequence occupies residues 1-27; that stretch reads MASKAIFFFFVSAVCLSSLAGVAIADA. 3 disulfides stabilise this stretch: Cys-41–Cys-112, Cys-44–Cys-157, and Cys-65–Cys-100. The N-linked (GlcNAc...) asparagine glycan is linked to Asn-70.

It belongs to the Ole e I family.

Its subcellular location is the secreted. The protein is Pollen-specific protein-like At4g18596 of Arabidopsis thaliana (Mouse-ear cress).